A 404-amino-acid chain; its full sequence is uncharacterized protein (404 aa).

Residues 1–22 (MASSINNSSQPTVPSISNNSHG) show a composition bias toward polar residues. Residues 1–110 (MASSINNSSQ…QQTPVKRRRR (110 aa)) form a disordered region. A Phosphothreonine modification is found at Thr47. Residues 87-104 (SRGSSLKSHLETESQQTP) are compositionally biased toward polar residues. The PHD-type zinc finger occupies 117–166 (VDYCSACGGRGLFICCEGCPCSFHLSCLEPPLTPENIPEGSWFCVTCSIK).

This is an uncharacterized protein from Schizosaccharomyces pombe (strain 972 / ATCC 24843) (Fission yeast).